The sequence spans 313 residues: Ornithine carbamoyltransferase (313 aa).

Carbamoyl phosphate-binding positions include 57–60, Gln-84, Arg-108, and 135–138; these read STRT and HPTQ. Residues Asn-167, Asp-231, and 235-236 each bind L-ornithine; that span reads SM. Carbamoyl phosphate contacts are provided by residues 272–273 and Arg-300; that span reads CL.

Belongs to the aspartate/ornithine carbamoyltransferase superfamily. OTCase family.

Its subcellular location is the cytoplasm. The catalysed reaction is carbamoyl phosphate + L-ornithine = L-citrulline + phosphate + H(+). Its pathway is amino-acid biosynthesis; L-arginine biosynthesis; L-arginine from L-ornithine and carbamoyl phosphate: step 1/3. In terms of biological role, reversibly catalyzes the transfer of the carbamoyl group from carbamoyl phosphate (CP) to the N(epsilon) atom of ornithine (ORN) to produce L-citrulline. The sequence is that of Ornithine carbamoyltransferase from Caldanaerobacter subterraneus subsp. tengcongensis (strain DSM 15242 / JCM 11007 / NBRC 100824 / MB4) (Thermoanaerobacter tengcongensis).